A 119-amino-acid chain; its full sequence is Large ribosomal subunit protein uL18 (119 aa).

A disordered region spans residues M1 to T25. The span at K9–S20 shows a compositional bias: basic residues.

It belongs to the universal ribosomal protein uL18 family. In terms of assembly, part of the 50S ribosomal subunit; part of the 5S rRNA/L5/L18/L25 subcomplex. Contacts the 5S and 23S rRNAs.

Its function is as follows. This is one of the proteins that bind and probably mediate the attachment of the 5S RNA into the large ribosomal subunit, where it forms part of the central protuberance. In Listeria innocua serovar 6a (strain ATCC BAA-680 / CLIP 11262), this protein is Large ribosomal subunit protein uL18.